Reading from the N-terminus, the 187-residue chain is Corticoliberin (187 aa).

A signal peptide spans 1–24 (MRLRLLVSAGMLLVALSPCLPCRA). The propeptide occupies 25–144 (LLSRGSVSGA…HQGALERERR (120 aa)). A disordered region spans residues 75 to 95 (AARLSPNSTPLTAGRGSRPSH). Ile-185 carries the isoleucine amide modification.

The protein belongs to the sauvagine/corticotropin-releasing factor/urotensin I family. Interacts (via C-terminus) with CRFR1 (via N-terminal extracellular domain). In terms of tissue distribution, produced by the hypothalamus.

The protein localises to the secreted. In terms of biological role, hormone regulating the release of corticotropin from pituitary gland. Induces NLRP6 in intestinal epithelial cells, hence may influence gut microbiota profile. This is Corticoliberin (Crh) from Rattus norvegicus (Rat).